A 251-amino-acid polypeptide reads, in one-letter code: tRNA pseudouridine synthase A (251 aa).

Asp54 functions as the Nucleophile in the catalytic mechanism. Substrate is bound at residue Tyr111.

This sequence belongs to the tRNA pseudouridine synthase TruA family. As to quaternary structure, homodimer.

The catalysed reaction is uridine(38/39/40) in tRNA = pseudouridine(38/39/40) in tRNA. Functionally, formation of pseudouridine at positions 38, 39 and 40 in the anticodon stem and loop of transfer RNAs. This chain is tRNA pseudouridine synthase A, found in Mycoplasma mycoides subsp. mycoides SC (strain CCUG 32753 / NCTC 10114 / PG1).